Reading from the N-terminus, the 426-residue chain is Histidine--tRNA ligase (426 aa).

Belongs to the class-II aminoacyl-tRNA synthetase family. Homodimer.

The protein resides in the cytoplasm. The catalysed reaction is tRNA(His) + L-histidine + ATP = L-histidyl-tRNA(His) + AMP + diphosphate + H(+). This Shewanella baltica (strain OS223) protein is Histidine--tRNA ligase.